Here is a 287-residue protein sequence, read N- to C-terminus: Polyamine aminopropyltransferase (287 aa).

Residues 5-238 enclose the PABS domain; that stretch reads EIWYETLHAN…GIMTFAWASQ (234 aa). Gln33 contacts S-methyl-5'-thioadenosine. Positions 64 and 88 each coordinate spermidine. Residues Glu108 and 140 to 141 contribute to the S-methyl-5'-thioadenosine site; that span reads DG. Asp158 functions as the Proton acceptor in the catalytic mechanism. Spermidine is bound at residue 158–161; sequence DCTD. Position 165 (Pro165) interacts with S-methyl-5'-thioadenosine.

This sequence belongs to the spermidine/spermine synthase family. Homodimer or homotetramer.

The protein resides in the cytoplasm. The catalysed reaction is S-adenosyl 3-(methylsulfanyl)propylamine + putrescine = S-methyl-5'-thioadenosine + spermidine + H(+). The protein operates within amine and polyamine biosynthesis; spermidine biosynthesis; spermidine from putrescine: step 1/1. In terms of biological role, catalyzes the irreversible transfer of a propylamine group from the amino donor S-adenosylmethioninamine (decarboxy-AdoMet) to putrescine (1,4-diaminobutane) to yield spermidine. This chain is Polyamine aminopropyltransferase, found in Serratia proteamaculans (strain 568).